The primary structure comprises 290 residues: MAKPTPAPRATPFLLAAVLSIVVVAASGAEARWYGGGGGGGYSPSPSPVSSIVSEQLYASLFLHKDDAACPARGFYTYASFVRAATRFPRFAATGCADARKREVAAFLAQISHETTGGWATAPDGPYAWGLCYKEEINPQSSYCDATDKQWPCYPGKSYHGRGPIQISWNFNYGPAGQALGFDGLRNPEIVANCSDIAFQTALWFWMTPRDTKPSCHQVMVGEYRPGPADVAANRTAGFGLVTNIVNGGLECNRAGDARVNNRIGFYRRYCQVLGVDVGPNLDCEHQQPF.

An N-terminal signal peptide occupies residues 1 to 28 (MAKPTPAPRATPFLLAAVLSIVVVAASG). 2 disulfide bridges follow: cysteine 70/cysteine 132 and cysteine 144/cysteine 153. Glutamate 114 acts as the Proton donor in catalysis. Asparagine 193 and asparagine 234 each carry an N-linked (GlcNAc...) asparagine glycan. Cysteines 252 and 284 form a disulfide.

It belongs to the glycosyl hydrolase 19 family. Chitinase class I subfamily. As to expression, expressed at low levels in roots, leaves and meristems.

It catalyses the reaction Random endo-hydrolysis of N-acetyl-beta-D-glucosaminide (1-&gt;4)-beta-linkages in chitin and chitodextrins.. In Oryza sativa subsp. japonica (Rice), this protein is Chitinase 10 (Cht10).